Reading from the N-terminus, the 474-residue chain is 3-isopropylmalate dehydratase large subunit (474 aa).

3 residues coordinate [4Fe-4S] cluster: cysteine 355, cysteine 415, and cysteine 418.

This sequence belongs to the aconitase/IPM isomerase family. LeuC type 1 subfamily. As to quaternary structure, heterodimer of LeuC and LeuD. It depends on [4Fe-4S] cluster as a cofactor.

It catalyses the reaction (2R,3S)-3-isopropylmalate = (2S)-2-isopropylmalate. The protein operates within amino-acid biosynthesis; L-leucine biosynthesis; L-leucine from 3-methyl-2-oxobutanoate: step 2/4. Its function is as follows. Catalyzes the isomerization between 2-isopropylmalate and 3-isopropylmalate, via the formation of 2-isopropylmaleate. This is 3-isopropylmalate dehydratase large subunit from Shewanella sp. (strain ANA-3).